The following is a 147-amino-acid chain: D-aminoacyl-tRNA deacylase (147 aa).

Positions 136-137 match the Gly-cisPro motif, important for rejection of L-amino acids motif; the sequence is GP.

It belongs to the DTD family. In terms of assembly, homodimer.

It localises to the cytoplasm. The enzyme catalyses glycyl-tRNA(Ala) + H2O = tRNA(Ala) + glycine + H(+). It carries out the reaction a D-aminoacyl-tRNA + H2O = a tRNA + a D-alpha-amino acid + H(+). An aminoacyl-tRNA editing enzyme that deacylates mischarged D-aminoacyl-tRNAs. Also deacylates mischarged glycyl-tRNA(Ala), protecting cells against glycine mischarging by AlaRS. Acts via tRNA-based rather than protein-based catalysis; rejects L-amino acids rather than detecting D-amino acids in the active site. By recycling D-aminoacyl-tRNA to D-amino acids and free tRNA molecules, this enzyme counteracts the toxicity associated with the formation of D-aminoacyl-tRNA entities in vivo and helps enforce protein L-homochirality. This Streptococcus agalactiae serotype III (strain NEM316) protein is D-aminoacyl-tRNA deacylase.